A 100-amino-acid chain; its full sequence is Large ribosomal subunit protein uL23 (100 aa).

The protein belongs to the universal ribosomal protein uL23 family. Part of the 50S ribosomal subunit. Contacts protein L29, and trigger factor when it is bound to the ribosome.

One of the early assembly proteins it binds 23S rRNA. One of the proteins that surrounds the polypeptide exit tunnel on the outside of the ribosome. Forms the main docking site for trigger factor binding to the ribosome. This is Large ribosomal subunit protein uL23 from Shewanella piezotolerans (strain WP3 / JCM 13877).